The primary structure comprises 984 residues: Ephrin type-B receptor 1 (984 aa).

Residues 1–17 (MALDYLLLLLLASAVAA) form the signal peptide. Residues 18–540 (MEETLMDTRT…YKSELREQLP (523 aa)) are Extracellular-facing. The region spanning 19 to 201 (EETLMDTRTA…FFKKCPSIVQ (183 aa)) is the Eph LBD domain. Fibronectin type-III domains follow at residues 322–432 (VPSG…TNQA) and 433–528 (APST…TLTD). 3 N-linked (GlcNAc...) asparagine glycosylation sites follow: Asn334, Asn426, and Asn480. The helical transmembrane segment at 541–563 (LIAGSAAAGVVFVVSLVAISIVC) threads the bilayer. Topologically, residues 564–984 (SRKRAYSKEA…QISQSPTAMA (421 aa)) are cytoplasmic. Position 600 is a phosphotyrosine (Tyr600). The Protein kinase domain maps to 619-882 (VKIEEVIGAG…EIVNTLDKMI (264 aa)). ATP-binding positions include 625 to 633 (IGAGEFGEV) and Lys651. Asp744 functions as the Proton acceptor in the catalytic mechanism. The region spanning 911-975 (TAFTTVDDWL…LNSIHSMRVQ (65 aa)) is the SAM domain. Tyr928 bears the Phosphotyrosine; by autocatalysis mark. The short motif at 982–984 (AMA) is the PDZ-binding element.

It belongs to the protein kinase superfamily. Tyr protein kinase family. Ephrin receptor subfamily. Heterotetramer upon binding of the ligand. The heterotetramer is composed of an ephrin dimer and a receptor dimer. Oligomerization is probably required to induce biological responses. Interacts with EPHB6; transphosphorylates EPHB6 to form an active signaling complex. Interacts with PICK1. Interacts (through Tyr-594) with NCK1 (via SH2 domain); activates the JUN cascade to regulate cell adhesion. The ligand-activated form interacts (through Tyr-928) with GRB7 and GRB10 (via SH2 domains). The ligand-activated form interacts (residues within the catalytic domain) with GRB2 (via SH2 domain). Interacts with GRB2, SHC1 and SRC; activates the MAPK/ERK cascade to regulate cell migration. Interacts with CBL; regulates receptor degradation through ubiquitination. Interacts with ACP1. In terms of processing, phosphorylated. Autophosphorylation is stimulated by the ligand EFNB1. Required for interaction with SH2 domain-containing interactors, for activation of the MAPK/ERK and JUN signaling cascades and for ubiquitination by CBL. Ubiquitinated; (EFNB1)ligand-induced poly- and/or multi-ubiquitination by CBL is regulated by SRC and leads to lysosomal degradation. In terms of tissue distribution, preferentially expressed in brain.

Its subcellular location is the cell membrane. The protein resides in the early endosome membrane. The protein localises to the cell projection. It is found in the dendrite. It catalyses the reaction L-tyrosyl-[protein] + ATP = O-phospho-L-tyrosyl-[protein] + ADP + H(+). In terms of biological role, receptor tyrosine kinase which binds promiscuously transmembrane ephrin-B family ligands residing on adjacent cells, leading to contact-dependent bidirectional signaling into neighboring cells. The signaling pathway downstream of the receptor is referred to as forward signaling while the signaling pathway downstream of the ephrin ligand is referred to as reverse signaling. Cognate/functional ephrin ligands for this receptor include EFNB1, EFNB2 and EFNB3. During nervous system development, regulates retinal axon guidance redirecting ipsilaterally ventrotemporal retinal ganglion cells axons at the optic chiasm midline. This probably requires repulsive interaction with EFNB2. In the adult nervous system together with EFNB3, regulates chemotaxis, proliferation and polarity of the hippocampus neural progenitors. In addition to its role in axon guidance also plays an important redundant role with other ephrin-B receptors in development and maturation of dendritic spines and synapse formation. May also regulate angiogenesis. More generally, may play a role in targeted cell migration and adhesion. Upon activation by EFNB1 and probably other ephrin-B ligands activates the MAPK/ERK and the JNK signaling cascades to regulate cell migration and adhesion respectively. Involved in the maintenance of the pool of satellite cells (muscle stem cells) by promoting their self-renewal and reducing their activation and differentiation. The protein is Ephrin type-B receptor 1 (EPHB1) of Homo sapiens (Human).